The sequence spans 362 residues: Chorismate synthase (362 aa).

NADP(+) is bound by residues R48 and R54. FMN-binding positions include 125 to 127, 238 to 239, G278, 293 to 297, and R319; these read RSS, NA, and KPTSS.

It belongs to the chorismate synthase family. Homotetramer. It depends on FMNH2 as a cofactor.

The enzyme catalyses 5-O-(1-carboxyvinyl)-3-phosphoshikimate = chorismate + phosphate. Its pathway is metabolic intermediate biosynthesis; chorismate biosynthesis; chorismate from D-erythrose 4-phosphate and phosphoenolpyruvate: step 7/7. In terms of biological role, catalyzes the anti-1,4-elimination of the C-3 phosphate and the C-6 proR hydrogen from 5-enolpyruvylshikimate-3-phosphate (EPSP) to yield chorismate, which is the branch point compound that serves as the starting substrate for the three terminal pathways of aromatic amino acid biosynthesis. This reaction introduces a second double bond into the aromatic ring system. The protein is Chorismate synthase of Tolumonas auensis (strain DSM 9187 / NBRC 110442 / TA 4).